We begin with the raw amino-acid sequence, 404 residues long: S-adenosylmethionine synthase (404 aa).

Positions 1–13 are enriched in polar residues; the sequence is MSQSRYFFTSESV. Residues 1-21 are disordered; that stretch reads MSQSRYFFTSESVSEGHPDKV. H17 contacts ATP. D19 contributes to the Mg(2+) binding site. Residue E45 coordinates K(+). L-methionine contacts are provided by E58 and Q101. The flexible loop stretch occupies residues 101–111; the sequence is QSPDINRGVDR. Residues 172-174, 245-246, D254, 260-261, A277, and K281 contribute to the ATP site; these read DAK, RF, and RK. D254 contributes to the L-methionine binding site. K285 contributes to the L-methionine binding site.

It belongs to the AdoMet synthase family. In terms of assembly, homotetramer; dimer of dimers. Mg(2+) is required as a cofactor. The cofactor is K(+).

It localises to the cytoplasm. It catalyses the reaction L-methionine + ATP + H2O = S-adenosyl-L-methionine + phosphate + diphosphate. Its pathway is amino-acid biosynthesis; S-adenosyl-L-methionine biosynthesis; S-adenosyl-L-methionine from L-methionine: step 1/1. Catalyzes the formation of S-adenosylmethionine (AdoMet) from methionine and ATP. The overall synthetic reaction is composed of two sequential steps, AdoMet formation and the subsequent tripolyphosphate hydrolysis which occurs prior to release of AdoMet from the enzyme. In Chlorobium phaeobacteroides (strain DSM 266 / SMG 266 / 2430), this protein is S-adenosylmethionine synthase.